We begin with the raw amino-acid sequence, 60 residues long: Large ribosomal subunit protein uL30 (60 aa).

This sequence belongs to the universal ribosomal protein uL30 family. Part of the 50S ribosomal subunit.

In Moorella thermoacetica (strain ATCC 39073 / JCM 9320), this protein is Large ribosomal subunit protein uL30.